Here is a 433-residue protein sequence, read N- to C-terminus: Putative ankyrin repeat protein R784 (433 aa).

ANK repeat units lie at residues 44–70, 71–101, 102–131, 179–205, 206–235, 237–264, 265–294, 296–321, 322–351, and 380–409; these read NQNL…KTDV, NGLK…NNDL, LDLH…IVII, FYDS…NQCS, VRQK…RIFS, RRLI…IDLA, QNNF…DIHF, NGEC…NKVY, MSEK…ACMS, and NMRK…KLRE.

This chain is Putative ankyrin repeat protein R784, found in Acanthamoeba polyphaga mimivirus (APMV).